Consider the following 302-residue polypeptide: Small ribosomal subunit biogenesis GTPase RsgA (302 aa).

Residues 69–229 (KNLLIRPKVA…VGDTPGFSKV (161 aa)) form the CP-type G domain. GTP-binding positions include 118–121 (NKID) and 172–180 (GPSGVGKSS). 4 residues coordinate Zn(2+): C252, C257, H259, and C265.

The protein belongs to the TRAFAC class YlqF/YawG GTPase family. RsgA subfamily. As to quaternary structure, monomer. Associates with 30S ribosomal subunit, binds 16S rRNA. Zn(2+) is required as a cofactor.

Its subcellular location is the cytoplasm. Functionally, one of several proteins that assist in the late maturation steps of the functional core of the 30S ribosomal subunit. Helps release RbfA from mature subunits. May play a role in the assembly of ribosomal proteins into the subunit. Circularly permuted GTPase that catalyzes slow GTP hydrolysis, GTPase activity is stimulated by the 30S ribosomal subunit. In Aquifex aeolicus (strain VF5), this protein is Small ribosomal subunit biogenesis GTPase RsgA.